Here is a 448-residue protein sequence, read N- to C-terminus: Homogentisate 1,2-dioxygenase (448 aa).

Histidine 303 (proton acceptor) is an active-site residue. Histidine 346 and glutamate 352 together coordinate Fe cation. Homogentisate contacts are provided by tyrosine 361 and histidine 382. Histidine 382 contacts Fe cation.

This sequence belongs to the homogentisate dioxygenase family. Hexamer; dimer of trimers. Requires Fe cation as cofactor.

The catalysed reaction is homogentisate + O2 = 4-maleylacetoacetate + H(+). It participates in amino-acid degradation; L-phenylalanine degradation; acetoacetate and fumarate from L-phenylalanine: step 4/6. Its function is as follows. Involved in the catabolism of homogentisate (2,5-dihydroxyphenylacetate or 2,5-OH-PhAc), a central intermediate in the degradation of phenylalanine and tyrosine. Catalyzes the oxidative ring cleavage of the aromatic ring of homogentisate to yield maleylacetoacetate. The protein is Homogentisate 1,2-dioxygenase of Nitrobacter hamburgensis (strain DSM 10229 / NCIMB 13809 / X14).